The primary structure comprises 318 residues: NAD(P)H-dependent D-xylose reductase (318 aa).

The active-site Proton donor is Tyr48. Residue His110 coordinates substrate. NAD(+) is bound by residues 165–166, 214–223, and 270–280; these read SN, SNFGPLSFLE, and KSTFPNTLAVN.

This sequence belongs to the aldo/keto reductase family.

The catalysed reaction is xylitol + NAD(+) = D-xylose + NADH + H(+). The enzyme catalyses xylitol + NADP(+) = D-xylose + NADPH + H(+). It functions in the pathway carbohydrate metabolism; D-xylose degradation. Functionally, reduces D-xylose into xylitol. Has a preference for NADPH, but can also utilize NADH as cosubstrate. The protein is NAD(P)H-dependent D-xylose reductase (XYL1) of Pachysolen tannophilus (Yeast).